Here is a 128-residue protein sequence, read N- to C-terminus: Probable soluble cytochrome b562 2 (128 aa).

The N-terminal stretch at 1-22 (MGKTLMALITAALLSTSSLVMA) is a signal peptide. Heme b contacts are provided by M29 and H124.

This sequence belongs to the cytochrome b562 family. The cofactor is heme b.

The protein localises to the periplasm. In terms of biological role, electron-transport protein of unknown function. This chain is Probable soluble cytochrome b562 2 (cybC2), found in Yersinia pestis.